The primary structure comprises 642 residues: Threonine--tRNA ligase (642 aa).

Positions 1–61 constitute a TGS domain; the sequence is MPVITLPDGS…ENDAQLAIIT (61 aa). Residues 243–534 are catalytic; the sequence is DHRKIGKQLD…LTEEFAGFFP (292 aa). Lysine 286 carries the N6-acetyllysine modification. Residues cysteine 334, histidine 385, and histidine 511 each coordinate Zn(2+).

Belongs to the class-II aminoacyl-tRNA synthetase family. Homodimer. It depends on Zn(2+) as a cofactor.

It localises to the cytoplasm. It carries out the reaction tRNA(Thr) + L-threonine + ATP = L-threonyl-tRNA(Thr) + AMP + diphosphate + H(+). Functionally, catalyzes the attachment of threonine to tRNA(Thr) in a two-step reaction: L-threonine is first activated by ATP to form Thr-AMP and then transferred to the acceptor end of tRNA(Thr). Also edits incorrectly charged L-seryl-tRNA(Thr). The protein is Threonine--tRNA ligase of Escherichia fergusonii (strain ATCC 35469 / DSM 13698 / CCUG 18766 / IAM 14443 / JCM 21226 / LMG 7866 / NBRC 102419 / NCTC 12128 / CDC 0568-73).